We begin with the raw amino-acid sequence, 133 residues long: Transcription antitermination protein NusB (133 aa).

This sequence belongs to the NusB family.

Involved in transcription antitermination. Required for transcription of ribosomal RNA (rRNA) genes. Binds specifically to the boxA antiterminator sequence of the ribosomal RNA (rrn) operons. The chain is Transcription antitermination protein NusB from Clostridium novyi (strain NT).